The chain runs to 118 residues: NADH-quinone oxidoreductase subunit A (118 aa).

3 helical membrane-spanning segments follow: residues I8–F28, A64–F84, and V87–L107.

It belongs to the complex I subunit 3 family. In terms of assembly, NDH-1 is composed of 14 different subunits. Subunits NuoA, H, J, K, L, M, N constitute the membrane sector of the complex.

Its subcellular location is the cell membrane. It catalyses the reaction a quinone + NADH + 5 H(+)(in) = a quinol + NAD(+) + 4 H(+)(out). In terms of biological role, NDH-1 shuttles electrons from NADH, via FMN and iron-sulfur (Fe-S) centers, to quinones in the respiratory chain. The immediate electron acceptor for the enzyme in this species is believed to be ubiquinone. Couples the redox reaction to proton translocation (for every two electrons transferred, four hydrogen ions are translocated across the cytoplasmic membrane), and thus conserves the redox energy in a proton gradient. The polypeptide is NADH-quinone oxidoreductase subunit A (Chloroflexus aurantiacus (strain ATCC 29366 / DSM 635 / J-10-fl)).